The chain runs to 208 residues: Protein-L-isoaspartate O-methyltransferase (208 aa).

The active site involves S59.

The protein belongs to the methyltransferase superfamily. L-isoaspartyl/D-aspartyl protein methyltransferase family.

It localises to the cytoplasm. It carries out the reaction [protein]-L-isoaspartate + S-adenosyl-L-methionine = [protein]-L-isoaspartate alpha-methyl ester + S-adenosyl-L-homocysteine. In terms of biological role, catalyzes the methyl esterification of L-isoaspartyl residues in peptides and proteins that result from spontaneous decomposition of normal L-aspartyl and L-asparaginyl residues. It plays a role in the repair and/or degradation of damaged proteins. This Vibrio atlanticus (strain LGP32) (Vibrio splendidus (strain Mel32)) protein is Protein-L-isoaspartate O-methyltransferase.